The following is a 261-amino-acid chain: Enolase-phosphatase E1 (261 aa).

Asp16 and Glu18 together coordinate Mg(2+). Substrate is bound by residues 153–154 (SS) and Lys187. Asp212 is a Mg(2+) binding site.

The protein belongs to the HAD-like hydrolase superfamily. MasA/MtnC family. Monomer. Requires Mg(2+) as cofactor.

Its subcellular location is the cytoplasm. It is found in the nucleus. The catalysed reaction is 5-methylsulfanyl-2,3-dioxopentyl phosphate + H2O = 1,2-dihydroxy-5-(methylsulfanyl)pent-1-en-3-one + phosphate. Its pathway is amino-acid biosynthesis; L-methionine biosynthesis via salvage pathway; L-methionine from S-methyl-5-thio-alpha-D-ribose 1-phosphate: step 3/6. It functions in the pathway amino-acid biosynthesis; L-methionine biosynthesis via salvage pathway; L-methionine from S-methyl-5-thio-alpha-D-ribose 1-phosphate: step 4/6. Its function is as follows. Bifunctional enzyme that catalyzes the enolization of 2,3-diketo-5-methylthiopentyl-1-phosphate (DK-MTP-1-P) into the intermediate 2-hydroxy-3-keto-5-methylthiopentenyl-1-phosphate (HK-MTPenyl-1-P), which is then dephosphorylated to form the acireductone 1,2-dihydroxy-3-keto-5-methylthiopentene (DHK-MTPene). In Salmo salar (Atlantic salmon), this protein is Enolase-phosphatase E1 (enoph1).